The chain runs to 183 residues: Protein GrpE (183 aa).

Residues 1 to 14 (MSNEENKINEEALK) are compositionally biased toward basic and acidic residues. The interval 1–20 (MSNEENKINEEALKQQDAAE) is disordered.

It belongs to the GrpE family. As to quaternary structure, homodimer.

The protein resides in the cytoplasm. Participates actively in the response to hyperosmotic and heat shock by preventing the aggregation of stress-denatured proteins, in association with DnaK and GrpE. It is the nucleotide exchange factor for DnaK and may function as a thermosensor. Unfolded proteins bind initially to DnaJ; upon interaction with the DnaJ-bound protein, DnaK hydrolyzes its bound ATP, resulting in the formation of a stable complex. GrpE releases ADP from DnaK; ATP binding to DnaK triggers the release of the substrate protein, thus completing the reaction cycle. Several rounds of ATP-dependent interactions between DnaJ, DnaK and GrpE are required for fully efficient folding. The chain is Protein GrpE from Vibrio vulnificus (strain CMCP6).